The chain runs to 556 residues: Genetic interactor of prohibitins 3, mitochondrial (556 aa).

The N-terminal 21 residues, 1 to 21, are a transit peptide targeting the mitochondrion; the sequence is MLNLCHALRGVRQFSCSVIVK. The region spanning 113–305 is the CP-type G domain; that stretch reads ESTLNDILNY…LFDLPGYSTS (193 aa).

It belongs to the TRAFAC class YlqF/YawG GTPase family. GEP3 subfamily.

The protein resides in the mitochondrion. Its function is as follows. Interacts genetically with prohibitins and thus may be involved in the mitochondrial lipid metabolism. The chain is Genetic interactor of prohibitins 3, mitochondrial (GEP3) from Saccharomyces cerevisiae (strain ATCC 204508 / S288c) (Baker's yeast).